Here is a 154-residue protein sequence, read N- to C-terminus: 6,7-dimethyl-8-ribityllumazine synthase (154 aa).

5-amino-6-(D-ribitylamino)uracil contacts are provided by residues Phe-22, 56-58, and 80-82; these read AFE and AVI. 85–86 contributes to the (2S)-2-hydroxy-3-oxobutyl phosphate binding site; sequence ET. His-88 serves as the catalytic Proton donor. Phe-113 provides a ligand contact to 5-amino-6-(D-ribitylamino)uracil. Arg-127 contacts (2S)-2-hydroxy-3-oxobutyl phosphate.

It belongs to the DMRL synthase family.

The catalysed reaction is (2S)-2-hydroxy-3-oxobutyl phosphate + 5-amino-6-(D-ribitylamino)uracil = 6,7-dimethyl-8-(1-D-ribityl)lumazine + phosphate + 2 H2O + H(+). Its pathway is cofactor biosynthesis; riboflavin biosynthesis; riboflavin from 2-hydroxy-3-oxobutyl phosphate and 5-amino-6-(D-ribitylamino)uracil: step 1/2. Functionally, catalyzes the formation of 6,7-dimethyl-8-ribityllumazine by condensation of 5-amino-6-(D-ribitylamino)uracil with 3,4-dihydroxy-2-butanone 4-phosphate. This is the penultimate step in the biosynthesis of riboflavin. The protein is 6,7-dimethyl-8-ribityllumazine synthase of Thermoanaerobacter pseudethanolicus (strain ATCC 33223 / 39E) (Clostridium thermohydrosulfuricum).